The sequence spans 1104 residues: Partner and localizer of BRCA2 (1104 aa).

The interval 1-157 is required for its oligomerization and is important for its focal concentration at DNA damage sites; it reads MEELSGKPLS…WEKSSVSQEK (157 aa). The tract at residues 1–195 is interaction with RAD51; it reads MEELSGKPLS…TPVSEKTHLL (195 aa). Residues 1 to 308 are interaction with BRCA1; sequence MEELSGKPLS…RAHGQLPGSP (308 aa). Residues 9–48 are a coiled coil; that stretch reads LSYAEKEKLKEKLAFLKKEYSRTLARLQRAKRAEKAKNSK. A compositionally biased stretch (basic and acidic residues) spans 39–52; sequence KRAEKAKNSKKAIE. Disordered stretches follow at residues 39 to 91, 122 to 157, and 243 to 272; these read KRAE…TGEN, GQLL…SQEK, and PSCT…TQGP. Composition is skewed to polar residues over residues 59-70 and 138-154; these read EASSQLSHSESI and NTLP…SSVS. The residue at position 274 (Ser274) is a Phosphoserine. Positions 304 to 354 are disordered; it reads LPGSPNSCSVNDLTHSNLPANSTPNSKSLKSPSNTVDERNEPLQEDEILGP. A compositionally biased stretch (polar residues) spans 306–338; the sequence is GSPNSCSVNDLTHSNLPANSTPNSKSLKSPSNT. Ser364 carries the phosphoserine modification. Residues 374-424 form a chAM (Chromatin-association motif); required for chromatin association, mediates nucleosome association region; sequence SCTMLEGLLFPAEYYVRTTRRMSDCQRKIALEAVIQSHLGVKKKELKKKTK. Disordered regions lie at residues 417 to 494 and 581 to 730; these read KELK…SART and LQRD…TPLP. At Ser432 the chain carries Phosphoserine. Over residues 446–462 the composition is skewed to low complexity; the sequence is TSTGQSSSGSLSQKLLS. Residues 483-492 are compositionally biased toward basic residues; sequence RGHRGKRKSA. Residues 664 to 713 show a composition bias toward polar residues; that stretch reads TLSTEAAQPCSTSQPPLLGDTNSLVNNSKQCNSSACSPKPDTNLQASGRQ. The tract at residues 693–1104 is required for interaction with POLH and POLH DNA synthesis stimulation; that stretch reads QCNSSACSPK…DGNIFIYRYF (412 aa). The tract at residues 771 to 1104 is interaction with RAD51 and BRCA2; that stretch reads GNLQLVSELK…DGNIFIYRYF (334 aa). The segment at 771-1104 is interaction with RAD51, BRCA2 and POLH; the sequence is GNLQLVSELK…DGNIFIYRYF (334 aa). WD repeat units follow at residues 772–833, 835–879, 880–927, 928–970, 976–1027, 1033–1071, and 1073–1104; these read NLQL…WHFT, VPVL…QVLL, KSGD…LMPP, DETV…MHID, SVCH…LLCS, AGRF…LLPP, and SDQS…YRYF.

Homooligomer; dissociated upon DNA damage thus allowing association with BRCA1. Oligomerization is essential for its focal accumulation at DNA breaks. Part of a BRCA complex containing BRCA1, BRCA2 and PALB2. Interacts with BRCA1 and this interaction is essential for its function in HRR. Interacts with RAD51AP1 and MORF4L1/MRG15. Component of the homologous recombination repair (HR) complex composed of ERCC5/XPG, BRCA2, PALB2, DSS1 and RAD51. Within the complex, interacts with ERCC5/XPG and BRCA2. Interacts with BRCA2, RAD51C, RAD51 and XRCC3; the interactions are direct and it may serve as a scaffold for a HR complex containing PALB2, BRCA2, RAD51C, RAD51 and XRCC3. Interacts with POLH; the interaction is direct.

The protein localises to the nucleus. Its function is as follows. Plays a critical role in homologous recombination repair (HRR) through its ability to recruit BRCA2 and RAD51 to DNA breaks. Strongly stimulates the DNA strand-invasion activity of RAD51, stabilizes the nucleoprotein filament against a disruptive BRC3-BRC4 polypeptide and helps RAD51 to overcome the suppressive effect of replication protein A (RPA). Functionally cooperates with RAD51AP1 in promoting of D-loop formation by RAD51. Serves as the molecular scaffold in the formation of the BRCA1-PALB2-BRCA2 complex which is essential for homologous recombination. Via its WD repeats is proposed to scaffold a HR complex containing RAD51C and BRCA2 which is thought to play a role in HR-mediated DNA repair. Essential partner of BRCA2 that promotes the localization and stability of BRCA2. Also enables its recombinational repair and checkpoint functions of BRCA2. May act by promoting stable association of BRCA2 with nuclear structures, allowing BRCA2 to escape the effects of proteasome-mediated degradation. Binds DNA with high affinity for D loop, which comprises single-stranded, double-stranded and branched DNA structures. May play a role in the extension step after strand invasion at replication-dependent DNA double-strand breaks; together with BRCA2 is involved in both POLH localization at collapsed replication forks and DNA polymerization activity. This is Partner and localizer of BRCA2 (Palb2) from Mus musculus (Mouse).